The primary structure comprises 313 residues: MNTFSQVWVFSDTPSRLPELMNGAQALANQINAFVLNDADGAQAIQLGANHVWKLNGKPDDRMIEDYAGVMADTIRQHGADGLVLLPNTRRGKLLAAKLGYRLKAAVSNDASTVSVQDGKATVKHMVYGGLAIGEERIATPYAVLTISSGTFDAAQPDASRTGETHTVEWQAPAVAITRTATQARQSNSVDLDKARLVVSVGRGIGSKDNIALAEQLCKAIGAELACSRPVAENEKWMEHERYVGISNLMLKPELYLAVGISGQIQHMVGANASQTIFAINKDKNAPIFQYADYGIVGDAVKILPALTAALAR.

Position 255–283 (leucine 255–aspartate 283) interacts with FAD.

The protein belongs to the ETF alpha-subunit/FixB family. As to quaternary structure, heterodimer of FixA and FixB.

It participates in amine and polyamine metabolism; carnitine metabolism. In terms of biological role, required for anaerobic carnitine reduction. May bring reductant to CaiA. The protein is Protein FixB of Escherichia coli O17:K52:H18 (strain UMN026 / ExPEC).